Here is a 311-residue protein sequence, read N- to C-terminus: Glutaminase (311 aa).

Positions 66, 116, 162, 169, 193, 245, and 263 each coordinate substrate.

This sequence belongs to the glutaminase family. In terms of assembly, homotetramer.

It carries out the reaction L-glutamine + H2O = L-glutamate + NH4(+). In Rhodopseudomonas palustris (strain HaA2), this protein is Glutaminase.